The chain runs to 464 residues: tRNA modification GTPase MnmE (464 aa).

(6S)-5-formyl-5,6,7,8-tetrahydrofolate-binding residues include Arg-29, Glu-91, and Arg-131. Residues 226-387 (GLKVALTGKP…LINYLLKKCG (162 aa)) enclose the TrmE-type G domain. Asn-236 lines the K(+) pocket. Residues 236–241 (NVGKSS), 255–261 (TDLPGTT), and 280–283 (DTAG) contribute to the GTP site. Ser-240 lines the Mg(2+) pocket. Residues Thr-255, Leu-257, and Thr-260 each coordinate K(+). Residue Thr-261 coordinates Mg(2+). Lys-464 is a binding site for (6S)-5-formyl-5,6,7,8-tetrahydrofolate.

The protein belongs to the TRAFAC class TrmE-Era-EngA-EngB-Septin-like GTPase superfamily. TrmE GTPase family. Homodimer. Heterotetramer of two MnmE and two MnmG subunits. Requires K(+) as cofactor.

The protein resides in the cytoplasm. Functionally, exhibits a very high intrinsic GTPase hydrolysis rate. Involved in the addition of a carboxymethylaminomethyl (cmnm) group at the wobble position (U34) of certain tRNAs, forming tRNA-cmnm(5)s(2)U34. The sequence is that of tRNA modification GTPase MnmE from Prochlorococcus marinus (strain NATL2A).